The following is a 237-amino-acid chain: Demethylmenaquinone methyltransferase (237 aa).

S-adenosyl-L-methionine-binding positions include threonine 58, aspartate 79, and 106–107; that span reads NA.

Belongs to the class I-like SAM-binding methyltransferase superfamily. MenG/UbiE family.

The enzyme catalyses a 2-demethylmenaquinol + S-adenosyl-L-methionine = a menaquinol + S-adenosyl-L-homocysteine + H(+). It functions in the pathway quinol/quinone metabolism; menaquinone biosynthesis; menaquinol from 1,4-dihydroxy-2-naphthoate: step 2/2. Methyltransferase required for the conversion of demethylmenaquinol (DMKH2) to menaquinol (MKH2). The sequence is that of Demethylmenaquinone methyltransferase from Bacillus cereus (strain ATCC 10987 / NRS 248).